The sequence spans 334 residues: Glucosyltransferase 3 (334 aa).

Residues Thr16, Arg179, and 249 to 254 contribute to the UDP site; that span reads SHKSAT.

This sequence belongs to the Gtf3 glucosyltransferase family. In terms of assembly, homotetramer; a dimer of dimers.

It participates in protein modification; protein glycosylation. In terms of biological role, required for polymorphic O-glycosylation of the serine-rich repeat protein in this bacteria. Catalyzes the second step in glycosylation by transferring glucose from UDP-glucose to the terminal GlcNAc moiety of the 3-O-(N-acetyl-alpha-D-glucosaminyl)-L-seryl-[protein] resulting from the first glycosylation step. Part of the accessory SecA2/SecY2 system specifically required to export GspB, a serine-rich repeat cell wall protein encoded upstream in the same operon. The sequence is that of Glucosyltransferase 3 from Streptococcus gordonii.